Here is a 446-residue protein sequence, read N- to C-terminus: Exodeoxyribonuclease 7 large subunit (446 aa).

Belongs to the XseA family. Heterooligomer composed of large and small subunits.

Its subcellular location is the cytoplasm. It carries out the reaction Exonucleolytic cleavage in either 5'- to 3'- or 3'- to 5'-direction to yield nucleoside 5'-phosphates.. Its function is as follows. Bidirectionally degrades single-stranded DNA into large acid-insoluble oligonucleotides, which are then degraded further into small acid-soluble oligonucleotides. The sequence is that of Exodeoxyribonuclease 7 large subunit from Streptococcus pneumoniae serotype 4 (strain ATCC BAA-334 / TIGR4).